The chain runs to 434 residues: MSTIVSVWAREILDSRGNPTVEVEVSLESGHTGRAAVPSGASTGSREALEMRDGDKGRYKGKGVEKAVDNVMGEIAEAIVGLDSLRQVQVDNTLLDLDGTDNKSRLGANAMLGVSLATARAASSFLGLPLYQYLGGVNAKVLPVPLMNIINGGAHAPNNLDIQEFMIMPIGAATFRDALRMGAETFHTLKALLAADGHVTSVGDEGGFAPNLKNHDEAFRYIMKAIEEAGYIPGAEIALAIDAAASEFHKDGKYVLAGEGKNLSNSEMVEWLGEFTTRYPLISIEDGLAEADWDGWRELTYKLGDTIQLVGDDIFVTNPDILAEGIDEGVANSILIKLNQIGTLTETLDTIEMAKQAAYTTVISHRSGETEDHFISDLAVGLNAGQIKTGSLCRSDRLAKYNQLLRIEEDLDDTGIYFGPMMSSHFGFEEEGEE.

Positions 29-56 (SGHTGRAAVPSGASTGSREALEMRDGDK) are disordered. Residues 47 to 56 (EALEMRDGDK) are compositionally biased toward basic and acidic residues. Q163 contributes to the (2R)-2-phosphoglycerate binding site. E205 acts as the Proton donor in catalysis. 3 residues coordinate Mg(2+): D242, E285, and D312. (2R)-2-phosphoglycerate-binding residues include K337, R366, S367, and K388. K337 functions as the Proton acceptor in the catalytic mechanism.

It belongs to the enolase family. Homooctamer. The cofactor is Mg(2+).

Its subcellular location is the cytoplasm. It is found in the secreted. The protein localises to the cell surface. It catalyses the reaction (2R)-2-phosphoglycerate = phosphoenolpyruvate + H2O. The protein operates within carbohydrate degradation; glycolysis; pyruvate from D-glyceraldehyde 3-phosphate: step 4/5. In terms of biological role, catalyzes the reversible conversion of 2-phosphoglycerate (2-PG) into phosphoenolpyruvate (PEP). It is essential for the degradation of carbohydrates via glycolysis. This is Enolase from Nitratidesulfovibrio vulgaris (strain DSM 19637 / Miyazaki F) (Desulfovibrio vulgaris).